The sequence spans 221 residues: Ribose-5-phosphate isomerase A (221 aa).

Substrate contacts are provided by residues 26 to 29 (TGST), 81 to 84 (DGAD), and 94 to 97 (KGGG). Catalysis depends on E103, which acts as the Proton acceptor. K121 lines the substrate pocket.

The protein belongs to the ribose 5-phosphate isomerase family. Homodimer.

The catalysed reaction is aldehydo-D-ribose 5-phosphate = D-ribulose 5-phosphate. It functions in the pathway carbohydrate degradation; pentose phosphate pathway; D-ribose 5-phosphate from D-ribulose 5-phosphate (non-oxidative stage): step 1/1. In terms of biological role, catalyzes the reversible conversion of ribose-5-phosphate to ribulose 5-phosphate. The chain is Ribose-5-phosphate isomerase A from Bacillus mycoides (strain KBAB4) (Bacillus weihenstephanensis).